A 432-amino-acid chain; its full sequence is Ornithine aminotransferase, mitochondrial (432 aa).

Lysine 287 is modified (N6-(pyridoxal phosphate)lysine).

It belongs to the class-III pyridoxal-phosphate-dependent aminotransferase family. In terms of assembly, homotetramer. The cofactor is pyridoxal 5'-phosphate.

It is found in the mitochondrion matrix. It catalyses the reaction a 2-oxocarboxylate + L-ornithine = L-glutamate 5-semialdehyde + an L-alpha-amino acid. It functions in the pathway amino-acid biosynthesis; L-proline biosynthesis; L-glutamate 5-semialdehyde from L-ornithine: step 1/1. This chain is Ornithine aminotransferase, mitochondrial (Oat), found in Drosophila ananassae (Fruit fly).